The primary structure comprises 354 residues: Glutamine synthetase (354 aa).

The GS beta-grasp domain occupies 22–101 (IQAEYVWVDG…VLAETYNSDG (80 aa)). Positions 108–354 (FRHHAAKVME…IIVETTLLNA (247 aa)) constitute a GS catalytic domain.

Belongs to the glutamine synthetase family. Homooctamer.

Its subcellular location is the cytoplasm. It catalyses the reaction L-glutamate + NH4(+) + ATP = L-glutamine + ADP + phosphate + H(+). The polypeptide is Glutamine synthetase (GLN1) (Hebeloma cylindrosporum).